The primary structure comprises 218 residues: Histidine biosynthesis bifunctional protein HisIE (218 aa).

Residues 1-118 (MTDLSELNFD…DAPDTGLDGT (118 aa)) form a phosphoribosyl-AMP cyclohydrolase region. The segment at 119-218 (LERVYATITE…SGLKGPKEVG (100 aa)) is phosphoribosyl-ATP pyrophosphohydrolase.

It in the N-terminal section; belongs to the PRA-CH family. In the C-terminal section; belongs to the PRA-PH family.

It is found in the cytoplasm. The enzyme catalyses 1-(5-phospho-beta-D-ribosyl)-ATP + H2O = 1-(5-phospho-beta-D-ribosyl)-5'-AMP + diphosphate + H(+). It catalyses the reaction 1-(5-phospho-beta-D-ribosyl)-5'-AMP + H2O = 1-(5-phospho-beta-D-ribosyl)-5-[(5-phospho-beta-D-ribosylamino)methylideneamino]imidazole-4-carboxamide. It participates in amino-acid biosynthesis; L-histidine biosynthesis; L-histidine from 5-phospho-alpha-D-ribose 1-diphosphate: step 2/9. It functions in the pathway amino-acid biosynthesis; L-histidine biosynthesis; L-histidine from 5-phospho-alpha-D-ribose 1-diphosphate: step 3/9. This Deinococcus radiodurans (strain ATCC 13939 / DSM 20539 / JCM 16871 / CCUG 27074 / LMG 4051 / NBRC 15346 / NCIMB 9279 / VKM B-1422 / R1) protein is Histidine biosynthesis bifunctional protein HisIE (hisI).